A 486-amino-acid chain; its full sequence is 23S rRNA (uracil(1939)-C(5))-methyltransferase RlmD (486 aa).

Positions 10 to 71 (TVKAPEYLPD…SSFEKAVVMA (62 aa)) constitute a TRAM domain. C84, C94, C97, and C176 together coordinate [4Fe-4S] cluster. Residues Q285, F314, N319, E335, N370, and D391 each contribute to the S-adenosyl-L-methionine site. Residue C442 is the Nucleophile of the active site.

This sequence belongs to the class I-like SAM-binding methyltransferase superfamily. RNA M5U methyltransferase family. RlmD subfamily.

It carries out the reaction uridine(1939) in 23S rRNA + S-adenosyl-L-methionine = 5-methyluridine(1939) in 23S rRNA + S-adenosyl-L-homocysteine + H(+). In terms of biological role, catalyzes the formation of 5-methyl-uridine at position 1939 (m5U1939) in 23S rRNA. The chain is 23S rRNA (uracil(1939)-C(5))-methyltransferase RlmD from Polaromonas sp. (strain JS666 / ATCC BAA-500).